Here is a 72-residue protein sequence, read N- to C-terminus: Disintegrin sasaimin (72 aa).

The region spanning 1 to 72 (EAGEECDCGA…SAGCPRNPFH (72 aa)) is the Disintegrin domain. 6 disulfide bridges follow: Cys-6/Cys-21, Cys-8/Cys-16, Cys-15/Cys-38, Cys-29/Cys-35, Cys-34/Cys-59, and Cys-47/Cys-66. Positions 51-53 (RGD) match the Cell attachment site motif.

It belongs to the venom metalloproteinase (M12B) family. P-II subfamily. P-IIa sub-subfamily. As to quaternary structure, monomer. Expressed by the venom gland.

The protein resides in the secreted. Its function is as follows. Inhibits ADP- (IC(50)=66 nM) and collagen-induced (IC(50)=100 nM) aggregation of human platelets. In vitro, inhibits adhesion of endothelial cells to vitronectin, type-I collagen and, to a lower degree, fibronectin and laminin. The chain is Disintegrin sasaimin from Cerrophidion sasai (Costa Rica montane pitviper).